A 420-amino-acid polypeptide reads, in one-letter code: UDP-N-acetylglucosamine 1-carboxyvinyltransferase (420 aa).

Position 22-23 (22-23) interacts with phosphoenolpyruvate; sequence KN. Arg94 lines the UDP-N-acetyl-alpha-D-glucosamine pocket. The active-site Proton donor is Cys118. Residue Cys118 is modified to 2-(S-cysteinyl)pyruvic acid O-phosphothioketal. UDP-N-acetyl-alpha-D-glucosamine-binding residues include Asp307 and Ile329.

This sequence belongs to the EPSP synthase family. MurA subfamily.

The protein localises to the cytoplasm. The enzyme catalyses phosphoenolpyruvate + UDP-N-acetyl-alpha-D-glucosamine = UDP-N-acetyl-3-O-(1-carboxyvinyl)-alpha-D-glucosamine + phosphate. It functions in the pathway cell wall biogenesis; peptidoglycan biosynthesis. Cell wall formation. Adds enolpyruvyl to UDP-N-acetylglucosamine. The polypeptide is UDP-N-acetylglucosamine 1-carboxyvinyltransferase (Granulibacter bethesdensis (strain ATCC BAA-1260 / CGDNIH1)).